The following is a 439-amino-acid chain: Tubulin beta chain (439 aa).

Residues Gln11, Glu69, Ser138, Gly142, Thr143, Gly144, Asn204, and Asn226 each contribute to the GTP site. Residue Glu69 participates in Mg(2+) binding.

Belongs to the tubulin family. Dimer of alpha and beta chains. A typical microtubule is a hollow water-filled tube with an outer diameter of 25 nm and an inner diameter of 15 nM. Alpha-beta heterodimers associate head-to-tail to form protofilaments running lengthwise along the microtubule wall with the beta-tubulin subunit facing the microtubule plus end conferring a structural polarity. Microtubules usually have 13 protofilaments but different protofilament numbers can be found in some organisms and specialized cells. Requires Mg(2+) as cofactor.

Its subcellular location is the cytoplasm. It localises to the cytoskeleton. Tubulin is the major constituent of microtubules, a cylinder consisting of laterally associated linear protofilaments composed of alpha- and beta-tubulin heterodimers. Microtubules grow by the addition of GTP-tubulin dimers to the microtubule end, where a stabilizing cap forms. Below the cap, tubulin dimers are in GDP-bound state, owing to GTPase activity of alpha-tubulin. The sequence is that of Tubulin beta chain (TUB2) from Encephalitozoon intestinalis (Microsporidian parasite).